The following is a 416-amino-acid chain: Phosphoglycerate kinase (416 aa).

Position 2 is an N-acetylserine (serine 2). Residues valine 23, aspartate 24, phenylalanine 25, asparagine 26, glutamine 38, arginine 39, serine 62, histidine 63, glycine 65, and arginine 66 each contribute to the (2R)-3-phosphoglycerate site. Lysine 82 is covalently cross-linked (Glycyl lysine isopeptide (Lys-Gly) (interchain with G-Cter in ubiquitin)). Position 93 is a phosphothreonine (threonine 93). Residue serine 110 is modified to Phosphoserine. 2 residues coordinate (2R)-3-phosphoglycerate: leucine 121 and arginine 122. 2 positions are modified to phosphoserine: serine 130 and serine 154. Positions 168 and 169 each coordinate (2R)-3-phosphoglycerate. At serine 172 the chain carries Phosphoserine. Lysine 197 participates in a covalent cross-link: Glycyl lysine isopeptide (Lys-Gly) (interchain with G-Cter in ubiquitin). A Phosphothreonine modification is found at threonine 203. ADP is bound at residue glycine 212. Glycine 212 provides a ligand contact to CDP. AMP is bound by residues alanine 213 and lysine 214. Alanine 213 and lysine 214 together coordinate ATP. A Mg(2+)-binding site is contributed by alanine 213. The Mg(2+) site is built by alanine 216 and aspartate 217. Aspartate 217 serves as a coordination point for CDP. Lysine 218 lines the AMP pocket. Lysine 218 is an ATP binding site. Residue glycine 236 participates in ADP binding. Glycine 236 is a CDP binding site. Glycine 237 contributes to the AMP binding site. Residue glycine 237 coordinates ATP. Threonine 241 is subject to Phosphothreonine. Glycyl lysine isopeptide (Lys-Gly) (interchain with G-Cter in ubiquitin) cross-links involve residues lysine 258 and lysine 274. A Phosphothreonine modification is found at threonine 298. Lysine 302 participates in a covalent cross-link: Glycyl lysine isopeptide (Lys-Gly) (interchain with G-Cter in ubiquitin). Residue glycine 311 participates in AMP binding. Positions 311 and 312 each coordinate ATP. Phosphoserine is present on serine 318. Threonine 331 bears the Phosphothreonine mark. Residue asparagine 335 coordinates ATP. The CDP site is built by glycine 336 and phenylalanine 341. Phenylalanine 341 serves as a coordination point for ADP. AMP is bound at residue glutamate 342. Residue glutamate 342 coordinates ATP. Glycine 371 contributes to the (2R)-3-phosphoglycerate binding site. Aspartate 373 and threonine 374 together coordinate ATP. Position 373 (aspartate 373) interacts with Mg(2+). A Phosphothreonine modification is found at threonine 392. (2R)-3-phosphoglycerate contacts are provided by glycine 394 and glycine 395.

Belongs to the phosphoglycerate kinase family. Monomer. Requires Mg(2+) as cofactor.

The protein localises to the cytoplasm. It localises to the mitochondrion. It catalyses the reaction (2R)-3-phosphoglycerate + ATP = (2R)-3-phospho-glyceroyl phosphate + ADP. Its pathway is carbohydrate degradation; glycolysis; pyruvate from D-glyceraldehyde 3-phosphate: step 2/5. Catalyzes one of the two ATP producing reactions in the glycolytic pathway via the reversible conversion of 1,3-diphosphoglycerate to 3-phosphoglycerate. Both L- and D- forms of purine and pyrimidine nucleotides can be used as substrates, but the activity is much lower on pyrimidines. Negatively regulates the biosynthesis of acetyl-CoA from pyruvate in the mitochondrion. The sequence is that of Phosphoglycerate kinase (PGK1) from Saccharomyces cerevisiae (strain ATCC 204508 / S288c) (Baker's yeast).